The chain runs to 721 residues: Oviduct-specific glycoprotein (721 aa).

The signal sequence occupies residues 1–21 (MGRLLLLAGLVLLMKHSDGTA). Residues 22 to 385 (YKLVCYFTNW…HILNELLVQT (364 aa)) enclose the GH18 domain. Cys-26 and Cys-51 form a disulfide bridge. Chitin contacts are provided by residues 71–72 (LQ), 98–101 (GGWN), Tyr-142, 211–214 (LSYD), and Trp-355. 2 N-linked (GlcNAc...) asparagine glycosylation sites follow: Asn-402 and Asn-442. A compositionally biased stretch (polar residues) spans 444–456 (TTVPSDGSVTPGG). The disordered stretch occupies residues 444-465 (TTVPSDGSVTPGGTASPRKHAV). The N-linked (GlcNAc...) asparagine glycan is linked to Asn-469. 21 consecutive repeat copies span residues 486-492 (SKTTTGV), 493-499 (SKTTTGI), 500-506 (SKTTTGV), 507-513 (SKTTTGV), 514-520 (SKATAGI), 521-527 (SKTIPEI), 528-534 (SKATAGV), 535-541 (SKTTTGV), 542-548 (SKTTTGI), 549-555 (SKTITGV), 556-562 (SKTTTGI), 563-569 (SKTTTGI), 570-576 (SKTTTGV), 577-583 (SKITTGV), 584-590 (SKTTTGI), 591-597 (SKTTTGI), 598-604 (SQTTTGI), 605-611 (SKTTTDI), 612-618 (SKTTTGI), 619-625 (SKTTPGI), and 626-632 (SKTTPGM). The tract at residues 486-632 (SKTTTGVSKT…PGISKTTPGM (147 aa)) is 21 X 7 AA tandem repeats of S-K-[TAI]-[TI]-[TAP]-[GED]-[IVM].

It belongs to the glycosyl hydrolase 18 family. In terms of tissue distribution, epithelial cells of the oviduct.

It is found in the cytoplasmic vesicle. It localises to the secretory vesicle. Functionally, binds to oocyte zona pellucida in vivo. May play a role in the fertilization process and/or early embryonic development. The polypeptide is Oviduct-specific glycoprotein (Ovgp1) (Mus musculus (Mouse)).